Here is a 274-residue protein sequence, read N- to C-terminus: Penicillin-insensitive murein endopeptidase (274 aa).

A signal peptide spans 1–19 (MNKTAIALLALLASSASLA). Cystine bridges form between C44–C265, C187–C235, and C216–C223. The Zn(2+) site is built by H110, H113, D120, D147, H150, and H211. The disordered stretch occupies residues 228-265 (LPPPGDGCGAELQSWFAPPKPGTTKPEKKTPPPLPPSC).

The protein belongs to the peptidase M74 family. In terms of assembly, dimer. Zn(2+) serves as cofactor.

The protein localises to the periplasm. Functionally, murein endopeptidase that cleaves the D-alanyl-meso-2,6-diamino-pimelyl amide bond that connects peptidoglycan strands. Likely plays a role in the removal of murein from the sacculus. The polypeptide is Penicillin-insensitive murein endopeptidase (Shigella boydii serotype 18 (strain CDC 3083-94 / BS512)).